A 623-amino-acid polypeptide reads, in one-letter code: Glycoprotein (623 aa).

An N-terminal signal peptide occupies residues 1–12 (MFKVLIITLLVN). Over 13 to 539 (KIHLEKIYNV…FTSTAKAVRW (527 aa)) the chain is Virion surface. Residues Asn-175, Asn-264, Asn-416, Asn-438, and Asn-507 are each glycosylated (N-linked (GlcNAc...) asparagine; by host). The chain crosses the membrane as a helical span at residues 540–554 (TIWAVGAIVTTYAIY). Over 555–623 (KLYKMVKSNS…QTGDDRFFDH (69 aa)) the chain is Intravirion.

It belongs to the rhabdoviruses glycoprotein family. Homotrimer.

Its subcellular location is the virion membrane. In terms of biological role, attaches the virus to host cellular receptors, inducing endocytosis of the virion. The acidic pH of the endosome induces conformational changes in the glycoprotein trimer which trigger fusion between the virus and the cell membrane. This is Glycoprotein (G) from Bovine ephemeral fever virus (strain BB7721) (BEFV).